We begin with the raw amino-acid sequence, 623 residues long: tRNA uridine 5-carboxymethylaminomethyl modification enzyme MnmG (623 aa).

An FAD-binding site is contributed by 12–17 (GAGHAG). An NAD(+)-binding site is contributed by 272-286 (GPRYCPSIEDKINRF).

It belongs to the MnmG family. In terms of assembly, homodimer. Heterotetramer of two MnmE and two MnmG subunits. Requires FAD as cofactor.

It localises to the cytoplasm. In terms of biological role, NAD-binding protein involved in the addition of a carboxymethylaminomethyl (cmnm) group at the wobble position (U34) of certain tRNAs, forming tRNA-cmnm(5)s(2)U34. This Flavobacterium psychrophilum (strain ATCC 49511 / DSM 21280 / CIP 103535 / JIP02/86) protein is tRNA uridine 5-carboxymethylaminomethyl modification enzyme MnmG.